A 185-amino-acid chain; its full sequence is MLQKRGRGLLVLLLMLLEWTRPGLLSPLRPICDLRVLNHFIKEARDAEVAMKSCTEGCSLSESVTVPQTRVDFDVWEKKNGLEQAQEVQSGLWLLQQALNLLRTSVTNTALHSHIDNSIRNLLSINAVLRSLNIQEYTPPASTVALEGTWRVSSATDLLQVHVNFLRGKVRLLLLDAQACQQDVS.

Residues 1–22 form the signal peptide; the sequence is MLQKRGRGLLVLLLMLLEWTRP. Intrachain disulfides connect cysteine 32/cysteine 180 and cysteine 54/cysteine 58.

The protein belongs to the EPO/TPO family.

It localises to the secreted. Erythropoietin is the principal hormone involved in the regulation of erythrocyte differentiation and the maintenance of a physiological level of circulating erythrocyte mass. The sequence is that of Erythropoietin (epo) from Epinephelus coioides (Orange-spotted grouper).